The primary structure comprises 255 residues: Tabinhibitin 7 (255 aa).

Residues 1–23 (MTSILVSSFLLATLVLQYATIDA) form the signal peptide. Residues 32–34 (RGD) carry the Cell attachment site motif. In terms of domain architecture, SCP spans 67–211 (LSKINDVRDH…KARALLTCNF (145 aa)).

This sequence belongs to the CRISP family. Expressed in salivary glands.

Its subcellular location is the secreted. Its function is as follows. Inhibits platelet aggregation induced by all agonists tested (ADP, arachidonic acid, the thromboxane A2 analog U46619, thrombin, and snake venom snaclecs (TMVA that activates platelet through GPIB, and stejnulxin that specifically acts through GPVI (GP6))). May act by competing with fibrinogen for binding to glycoprotein IIb/IIIa (ITGA2B/ITGB3). This is Tabinhibitin 7 from Tabanus yao (Horsefly).